The primary structure comprises 217 residues: Protein-L-isoaspartate O-methyltransferase (217 aa).

Residue S65 is part of the active site.

It belongs to the methyltransferase superfamily. L-isoaspartyl/D-aspartyl protein methyltransferase family.

The protein resides in the cytoplasm. The catalysed reaction is [protein]-L-isoaspartate + S-adenosyl-L-methionine = [protein]-L-isoaspartate alpha-methyl ester + S-adenosyl-L-homocysteine. Catalyzes the methyl esterification of L-isoaspartyl residues in peptides and proteins that result from spontaneous decomposition of normal L-aspartyl and L-asparaginyl residues. It plays a role in the repair and/or degradation of damaged proteins. This Chlorobium limicola (strain DSM 245 / NBRC 103803 / 6330) protein is Protein-L-isoaspartate O-methyltransferase.